The chain runs to 203 residues: Snake venom metalloproteinase atroxase (203 aa).

Residue Glu1 is modified to Pyrrolidone carboxylic acid (Glu). The N-linked (GlcNAc...) asparagine glycan is linked to Asn5. Positions 9–203 (RYIELVVVAD…KQYNPQIXNK (195 aa)) constitute a Peptidase M12B domain. Residues Glu12 and Asp96 each coordinate Ca(2+). Residue His145 participates in Zn(2+) binding. Glu146 is a catalytic residue. Residues His149 and His155 each coordinate Zn(2+). Cys160 and Cys167 are joined by a disulfide. Ca(2+) is bound at residue Asn202.

Belongs to the venom metalloproteinase (M12B) family. P-I subfamily. In terms of assembly, monomer. The cofactor is Zn(2+). The N-terminus is blocked. As to expression, expressed by the venom gland.

It is found in the secreted. The catalysed reaction is Cleavage of 5-His-|-Leu-6, 9-Ser-|-His-10, 10-His-|-Leu-11, 14-Ala-|-Leu-15 and 16-Tyr-|-Leu-17 in insulin B chain.. Its activity is regulated as follows. Inhibited by EDTA and alpha2-macroglobulin. Functionally, snake venom zinc metalloprotease that has Aalpha, Bbeta fibrin(ogen)olytic activities. It cleaves the Aalpha chain of fibrinogen first followed by the Bbeta chain and shows no effect on the gamma chain. Does not induce or inhibit platelet aggregation, and is unable to activate plasminogen. Exhibits low lethality when tested on mice. Intravenous administration results in thrombolysis within one hour followed by recanalization. Fibrinogenolytic activity results in a 60% decrease in the rat's plasma fibrinogen level. Histological examination of kidney, liver, heart and lung tissue shows no necrosis nor hemorrhage. The sequence is that of Snake venom metalloproteinase atroxase from Crotalus atrox (Western diamondback rattlesnake).